Here is an 89-residue protein sequence, read N- to C-terminus: Large ribosomal subunit protein bL27 (89 aa).

Belongs to the bacterial ribosomal protein bL27 family.

The chain is Large ribosomal subunit protein bL27 from Bacteroides thetaiotaomicron (strain ATCC 29148 / DSM 2079 / JCM 5827 / CCUG 10774 / NCTC 10582 / VPI-5482 / E50).